Consider the following 503-residue polypeptide: Probable cytosol aminopeptidase (503 aa).

Residues lysine 268 and aspartate 273 each coordinate Mn(2+). Lysine 280 is a catalytic residue. Residues aspartate 291, aspartate 350, and glutamate 352 each coordinate Mn(2+). Arginine 354 is an active-site residue.

It belongs to the peptidase M17 family. Requires Mn(2+) as cofactor.

It is found in the cytoplasm. It catalyses the reaction Release of an N-terminal amino acid, Xaa-|-Yaa-, in which Xaa is preferably Leu, but may be other amino acids including Pro although not Arg or Lys, and Yaa may be Pro. Amino acid amides and methyl esters are also readily hydrolyzed, but rates on arylamides are exceedingly low.. The catalysed reaction is Release of an N-terminal amino acid, preferentially leucine, but not glutamic or aspartic acids.. In terms of biological role, presumably involved in the processing and regular turnover of intracellular proteins. Catalyzes the removal of unsubstituted N-terminal amino acids from various peptides. The sequence is that of Probable cytosol aminopeptidase from Methylobacterium radiotolerans (strain ATCC 27329 / DSM 1819 / JCM 2831 / NBRC 15690 / NCIMB 10815 / 0-1).